Here is a 258-residue protein sequence, read N- to C-terminus: Probable pectin methylesterase CGR3 (258 aa).

Over 1 to 29 the chain is Cytoplasmic; the sequence is MSRRQVRRVGDSGSFPFVGALHSKSRSSP. The helical transmembrane segment at 30–50 threads the bilayer; it reads LLSVCLVLVGACLLIGYAYSG. Over 51–258 the chain is Lumenal; that stretch reads PGMFKSIREV…CQVFHLKPLH (208 aa). The N-linked (GlcNAc...) asparagine glycan is linked to Asn171.

Belongs to the class I-like SAM-binding methyltransferase superfamily.

It is found in the golgi apparatus membrane. Together with CGR2, required for homogalacturonan pectins (HG) methylesterification in the Golgi apparatus prior to integration into cell walls, essential for general growth and development. Promotes petiole elongation. Impacts photosynthesis and respiration efficiency by influencing leaf mesophyll morphology and physiology; pectin methylesterification modulates both expansion and positioning of cells in leaves, probably by changing cell walls plasticity. This chain is Probable pectin methylesterase CGR3, found in Arabidopsis thaliana (Mouse-ear cress).